Consider the following 512-residue polypeptide: 2-isopropylmalate synthase (512 aa).

In terms of domain architecture, Pyruvate carboxyltransferase spans 4–266; the sequence is IQFFDTTLRD…ETNIVLNQFK (263 aa). Positions 13, 201, 203, and 237 each coordinate Mn(2+). Residues 390–512 form a regulatory domain region; the sequence is ELKHLQVQYV…SKQADFEEVK (123 aa).

The protein belongs to the alpha-IPM synthase/homocitrate synthase family. LeuA type 1 subfamily. In terms of assembly, homodimer. It depends on Mn(2+) as a cofactor.

Its subcellular location is the cytoplasm. It catalyses the reaction 3-methyl-2-oxobutanoate + acetyl-CoA + H2O = (2S)-2-isopropylmalate + CoA + H(+). Its pathway is amino-acid biosynthesis; L-leucine biosynthesis; L-leucine from 3-methyl-2-oxobutanoate: step 1/4. In terms of biological role, catalyzes the condensation of the acetyl group of acetyl-CoA with 3-methyl-2-oxobutanoate (2-ketoisovalerate) to form 3-carboxy-3-hydroxy-4-methylpentanoate (2-isopropylmalate). This is 2-isopropylmalate synthase from Listeria innocua serovar 6a (strain ATCC BAA-680 / CLIP 11262).